A 170-amino-acid polypeptide reads, in one-letter code: Adenine phosphoribosyltransferase (170 aa).

The protein belongs to the purine/pyrimidine phosphoribosyltransferase family. Homodimer.

The protein localises to the cytoplasm. It carries out the reaction AMP + diphosphate = 5-phospho-alpha-D-ribose 1-diphosphate + adenine. Its pathway is purine metabolism; AMP biosynthesis via salvage pathway; AMP from adenine: step 1/1. Catalyzes a salvage reaction resulting in the formation of AMP, that is energically less costly than de novo synthesis. The polypeptide is Adenine phosphoribosyltransferase (Alkaliphilus metalliredigens (strain QYMF)).